The chain runs to 552 residues: DUF724 domain-containing protein 10 (552 aa).

Positions 308 to 361 are disordered; that stretch reads SSLTQGSGDKTEVETQRKTFPKKTLPRNQNGSGNDSTLENENSNRKRKREENLC. Residues 333 to 348 are compositionally biased toward polar residues; it reads PRNQNGSGNDSTLENE. The 173-residue stretch at 371-543 folds into the DUF724 domain; that stretch reads ILFEKKLPVW…LEFQATASAP (173 aa).

As to expression, expressed at low levels in leaves, stems, flowers and siliques.

Its function is as follows. May be involved in the polar growth of plant cells via transportation of RNAs. The sequence is that of DUF724 domain-containing protein 10 from Arabidopsis thaliana (Mouse-ear cress).